Consider the following 252-residue polypeptide: MGKPLQVGVISLFPEMFSAVTDYGVTGRAIKEGLLTVSVWNPRDFTHDRHRTVDDRPYGGGPGMLMMVQPLVDAINAAKQSLGEDTPVIYLSPQGQKLDHSGVQHLSGNDRMILIAGRYEGIDERVIKQYVDAEWSIGDYVLSGGELPAMVLIDAVSRLIPGVLGHQDSAAEDSFASGLLDCPHYTRPETYNEQQVPPVLLSGDHEKIRRWRLQQSLGKTWLQRPELIHSLALTDEQETLLNEFIAQQSSGE.

S-adenosyl-L-methionine is bound by residues G117 and 137–142 (IGDYVL).

Belongs to the RNA methyltransferase TrmD family. As to quaternary structure, homodimer.

It localises to the cytoplasm. It catalyses the reaction guanosine(37) in tRNA + S-adenosyl-L-methionine = N(1)-methylguanosine(37) in tRNA + S-adenosyl-L-homocysteine + H(+). Specifically methylates guanosine-37 in various tRNAs. This chain is tRNA (guanine-N(1)-)-methyltransferase, found in Idiomarina loihiensis (strain ATCC BAA-735 / DSM 15497 / L2-TR).